Consider the following 407-residue polypeptide: Carbamoyl phosphate synthase small chain (407 aa).

A CPSase region spans residues 1 to 205 (MTETTPKTAP…LQDGYGEQDA (205 aa)). Ser60, Gly257, and Gly259 together coordinate L-glutamine. One can recognise a Glutamine amidotransferase type-1 domain in the interval 209–397 (HVVALDFGVK…INLIRERKGQ (189 aa)). Cys286 functions as the Nucleophile in the catalytic mechanism. The L-glutamine site is built by Leu287, Gln290, Asn328, Gly330, and Phe331. Catalysis depends on residues His370 and Glu372.

This sequence belongs to the CarA family. As to quaternary structure, composed of two chains; the small (or glutamine) chain promotes the hydrolysis of glutamine to ammonia, which is used by the large (or ammonia) chain to synthesize carbamoyl phosphate. Tetramer of heterodimers (alpha,beta)4.

It carries out the reaction hydrogencarbonate + L-glutamine + 2 ATP + H2O = carbamoyl phosphate + L-glutamate + 2 ADP + phosphate + 2 H(+). The catalysed reaction is L-glutamine + H2O = L-glutamate + NH4(+). Its pathway is amino-acid biosynthesis; L-arginine biosynthesis; carbamoyl phosphate from bicarbonate: step 1/1. It participates in pyrimidine metabolism; UMP biosynthesis via de novo pathway; (S)-dihydroorotate from bicarbonate: step 1/3. Its function is as follows. Small subunit of the glutamine-dependent carbamoyl phosphate synthetase (CPSase). CPSase catalyzes the formation of carbamoyl phosphate from the ammonia moiety of glutamine, carbonate, and phosphate donated by ATP, constituting the first step of 2 biosynthetic pathways, one leading to arginine and/or urea and the other to pyrimidine nucleotides. The small subunit (glutamine amidotransferase) binds and cleaves glutamine to supply the large subunit with the substrate ammonia. The chain is Carbamoyl phosphate synthase small chain from Brucella canis (strain ATCC 23365 / NCTC 10854 / RM-666).